The chain runs to 434 residues: Glutamate-1-semialdehyde 2,1-aminomutase (434 aa).

N6-(pyridoxal phosphate)lysine is present on Lys267.

This sequence belongs to the class-III pyridoxal-phosphate-dependent aminotransferase family. HemL subfamily. Homodimer. Pyridoxal 5'-phosphate is required as a cofactor.

It localises to the cytoplasm. It carries out the reaction (S)-4-amino-5-oxopentanoate = 5-aminolevulinate. The protein operates within porphyrin-containing compound metabolism; protoporphyrin-IX biosynthesis; 5-aminolevulinate from L-glutamyl-tRNA(Glu): step 2/2. It participates in porphyrin-containing compound metabolism; chlorophyll biosynthesis. The protein is Glutamate-1-semialdehyde 2,1-aminomutase of Roseiflexus castenholzii (strain DSM 13941 / HLO8).